The primary structure comprises 410 residues: Peptidase T (410 aa).

Residue His-79 participates in Zn(2+) binding. The active site involves Asp-81. Asp-142 serves as a coordination point for Zn(2+). Residue Glu-176 is the Proton acceptor of the active site. Zn(2+) is bound by residues Glu-177, Asp-199, and His-381.

The protein belongs to the peptidase M20B family. Zn(2+) serves as cofactor.

The protein localises to the cytoplasm. It carries out the reaction Release of the N-terminal residue from a tripeptide.. Its function is as follows. Cleaves the N-terminal amino acid of tripeptides. This Bacillus velezensis (strain DSM 23117 / BGSC 10A6 / LMG 26770 / FZB42) (Bacillus amyloliquefaciens subsp. plantarum) protein is Peptidase T.